Consider the following 89-residue polypeptide: Small ribosomal subunit protein uS14B (89 aa).

The tract at residues 38 to 61 is disordered; the sequence is KLPKDAHPSRLKLRDQTDGRPRGY. The segment covering 39–58 has biased composition (basic and acidic residues); it reads LPKDAHPSRLKLRDQTDGRP.

Belongs to the universal ribosomal protein uS14 family. Part of the 30S ribosomal subunit. Contacts proteins S3 and S10.

Binds 16S rRNA, required for the assembly of 30S particles and may also be responsible for determining the conformation of the 16S rRNA at the A site. The sequence is that of Small ribosomal subunit protein uS14B from Enterococcus faecalis (strain ATCC 700802 / V583).